Here is a 465-residue protein sequence, read N- to C-terminus: Citrate synthase-like protein (465 aa).

Positions 13–40 (HISDMVDSTKMNGNQSQDTAGRADTPVS) are disordered. Residues 21-31 (TKMNGNQSQDT) show a composition bias toward polar residues. Active-site residues include His-357 and Asp-413.

The protein belongs to the citrate synthase family.

Its pathway is secondary metabolite biosynthesis. In terms of biological role, citrate synthase-like protein; part of the gene cluster that mediates the biosynthesis of squalestatin S1 (SQS1, also known as zaragozic acid A), a heavily oxidized fungal polyketide that offers potent cholesterol lowering activity by targeting squalene synthase (SS). SQS1 is composed of a 2,8-dioxobicyclic[3.2.1]octane-3,4,5-tricarboxyclic acid core that is connected to two lipophilic polyketide arms. These initial steps feature the priming of an unusual benzoic acid starter unit onto the highly reducing polyketide synthase pks2, followed by oxaloacetate extension and product release to generate a tricarboxylic acid containing product. The phenylalanine ammonia lyase (PAL) M7 and the acyl-CoA ligase M9 are involved in transforming phenylalanine into benzoyl-CoA. The citrate synthase-like protein R3 is involved in connecting the C-alpha-carbons of the hexaketide chain and oxaloacetate to afford the tricarboxylic acid unit. The potential hydrolytic enzymes, M8 and M10, are in close proximity to pks2 and may participate in product release. On the other side, the tetraketide arm is synthesized by a the squalestatin tetraketide synthase pks1 and enzymatically esterified to the core in the last biosynthetic step, by the acetyltransferase M4. The biosynthesis of the tetraketide must involve 3 rounds of chain extension. After the first and second rounds methyl-transfer occurs, and in all rounds of extension the ketoreductase and dehydratase are active. The enoyl reductase and C-MeT of pks1 are not active in the final round of extension. The acetyltransferase M4 appears to have a broad substrate selectivity for its acyl CoA substrate, allowing the in vitro synthesis of novel squalestatins. The biosynthesis of SQS1 requires several oxidative steps likely performed by oxidoreductases M1, R1 and R2. Finally, in support of the identification of the cluster as being responsible for SQS1 production, the cluster contains a gene encoding a putative squalene synthase (SS) R6, suggesting a likely mechanism for self-resistance. The chain is Citrate synthase-like protein from Phoma sp. (strain ATCC 20986 / MF5453).